A 296-amino-acid polypeptide reads, in one-letter code: Cytidine deaminase (296 aa).

2 consecutive CMP/dCMP-type deaminase domains span residues A47 to S167 and D186 to E296. Residue N88 to E90 participates in substrate binding. H101 is a binding site for Zn(2+). E103 serves as the catalytic Proton donor. Zn(2+)-binding residues include C128 and C131.

This sequence belongs to the cytidine and deoxycytidylate deaminase family. Homodimer. It depends on Zn(2+) as a cofactor.

The enzyme catalyses cytidine + H2O + H(+) = uridine + NH4(+). It carries out the reaction 2'-deoxycytidine + H2O + H(+) = 2'-deoxyuridine + NH4(+). This enzyme scavenges exogenous and endogenous cytidine and 2'-deoxycytidine for UMP synthesis. In Shewanella sediminis (strain HAW-EB3), this protein is Cytidine deaminase.